A 385-amino-acid chain; its full sequence is Spermidine/putrescine import ATP-binding protein PotA (385 aa).

Positions 6 to 238 (IEFKNVSKVF…PINHFVATFI (233 aa)) constitute an ABC transporter domain. 40-47 (GSSGSGKS) contacts ATP.

It belongs to the ABC transporter superfamily. Spermidine/putrescine importer (TC 3.A.1.11.1) family. The complex is composed of two ATP-binding proteins (PotA), two transmembrane proteins (PotB and PotC) and a solute-binding protein (PotD).

The protein localises to the cell membrane. It carries out the reaction ATP + H2O + polyamine-[polyamine-binding protein]Side 1 = ADP + phosphate + polyamineSide 2 + [polyamine-binding protein]Side 1.. Functionally, part of the ABC transporter complex PotABCD involved in spermidine/putrescine import. Responsible for energy coupling to the transport system. In Streptococcus sanguinis (strain SK36), this protein is Spermidine/putrescine import ATP-binding protein PotA.